The sequence spans 296 residues: Nucleotide-binding protein M6_Spy0559 (296 aa).

An ATP-binding site is contributed by 13–20 (GMSGAGKT). Residue 63–66 (DMRS) participates in GTP binding.

This sequence belongs to the RapZ-like family.

Functionally, displays ATPase and GTPase activities. In Streptococcus pyogenes serotype M6 (strain ATCC BAA-946 / MGAS10394), this protein is Nucleotide-binding protein M6_Spy0559.